Consider the following 458-residue polypeptide: uncharacterized protein (458 aa).

It belongs to the glycerate kinase type-2 family.

This is an uncharacterized protein from Caenorhabditis elegans.